Reading from the N-terminus, the 186-residue chain is Threonylcarbamoyl-AMP synthase (186 aa).

Residues 5 to 186 form the YrdC-like domain; the sequence is LLTIKAAAKL…WEAQTQKRLR (182 aa).

This sequence belongs to the SUA5 family. TsaC subfamily.

The protein resides in the cytoplasm. The catalysed reaction is L-threonine + hydrogencarbonate + ATP = L-threonylcarbamoyladenylate + diphosphate + H2O. Functionally, required for the formation of a threonylcarbamoyl group on adenosine at position 37 (t(6)A37) in tRNAs that read codons beginning with adenine. Catalyzes the conversion of L-threonine, HCO(3)(-)/CO(2) and ATP to give threonylcarbamoyl-AMP (TC-AMP) as the acyladenylate intermediate, with the release of diphosphate. This Hydrogenovibrio crunogenus (strain DSM 25203 / XCL-2) (Thiomicrospira crunogena) protein is Threonylcarbamoyl-AMP synthase.